Consider the following 524-residue polypeptide: MGMGQEKHTDAASQSRDPEAVAAHENDQLRQRNHALAKALTRATEELRKAKAQLEQFMAPPLTMATMVRVHRCSTDEHGVRHASAEILNGNRRQIVPLSPTVNPAQLGSGQGVLLDANMVIVDSCETPTTGPMRAVSESLADGRLIVSDVGGNRGVVMRASAVARTPINVDDRVVIDPSGTYVLSVLPQEQAQDLLLEETPDVSFTDIGGLDEQIARIRDAVQLPFQHRDLFDRFDLKAPKGVLLYGPPGNGKTLIAKAIAHELAAGSGNDGVFLSVKGPELLNKFVGESERLIRRIFERAKELSGAGRPVIVFIDEMDSLLRTRGTGVSSDVETTIVPQFLTELDGVESLDDVMVIGASNRIDMIDPAVLRPGRLDVKIHVTRPDETAAMAITRHYLTDALPLEPGRDADALAASLVRDLFRRDESRLLATLDEQGRRRGIYMADIVSGAMLRNIVDRAKTKAVKAEILHGSVSRDDEPQGITEARIHEAIDDEYEQNRSTINETDPGQWLRINALTLAADGV.

The segment at 1 to 29 is disordered; that stretch reads MGMGQEKHTDAASQSRDPEAVAAHENDQL. A coiled-coil region spans residues 22–59; that stretch reads AAHENDQLRQRNHALAKALTRATEELRKAKAQLEQFMA. 250–255 is an ATP binding site; the sequence is GNGKTL.

It belongs to the AAA ATPase family. Homohexamer. Assembles into a hexameric ring structure.

This is AAA ATPase forming ring-shaped complexes from Bifidobacterium animalis subsp. lactis (strain BB-12).